The following is a 310-amino-acid chain: Protoheme IX farnesyltransferase 2 (310 aa).

9 helical membrane-spanning segments follow: residues 25 to 45 (PGII…AAKG), 49 to 69 (LVLM…GCAI), 98 to 118 (HVLL…ALFT), 121 to 141 (LALL…SLYM), 145 to 165 (SVYG…VGYC), 176 to 196 (VILL…IAIF), 222 to 242 (IVLY…AGYT), 245 to 265 (AFMA…LKGY), and 277 to 297 (QVFG…ALDF).

The protein belongs to the UbiA prenyltransferase family. Protoheme IX farnesyltransferase subfamily.

Its subcellular location is the cell inner membrane. The catalysed reaction is heme b + (2E,6E)-farnesyl diphosphate + H2O = Fe(II)-heme o + diphosphate. It functions in the pathway porphyrin-containing compound metabolism; heme O biosynthesis; heme O from protoheme: step 1/1. Converts heme B (protoheme IX) to heme O by substitution of the vinyl group on carbon 2 of heme B porphyrin ring with a hydroxyethyl farnesyl side group. In Shewanella sp. (strain MR-4), this protein is Protoheme IX farnesyltransferase 2.